The primary structure comprises 302 residues: Quinolinate synthase (302 aa).

Residues His24 and Ser41 each coordinate iminosuccinate. Cys86 is a binding site for [4Fe-4S] cluster. Residues 112-114 (YVN) and Ser129 each bind iminosuccinate. Cys171 lines the [4Fe-4S] cluster pocket. Iminosuccinate contacts are provided by residues 197 to 199 (HPE) and Thr214. Cys259 is a binding site for [4Fe-4S] cluster.

Belongs to the quinolinate synthase family. Type 2 subfamily. [4Fe-4S] cluster serves as cofactor.

Its subcellular location is the cytoplasm. The enzyme catalyses iminosuccinate + dihydroxyacetone phosphate = quinolinate + phosphate + 2 H2O + H(+). It functions in the pathway cofactor biosynthesis; NAD(+) biosynthesis; quinolinate from iminoaspartate: step 1/1. Its function is as follows. Catalyzes the condensation of iminoaspartate with dihydroxyacetone phosphate to form quinolinate. In Dehalococcoides mccartyi (strain ATCC BAA-2100 / JCM 16839 / KCTC 5957 / BAV1), this protein is Quinolinate synthase.